The chain runs to 131 residues: Fumarate reductase subunit C (131 aa).

3 helical membrane passes run 30–50 (EGTAVPAVWFSIELIFGLFAL), 63–83 (FLQNPVIVIINLITLAAALLH), and 109–129 (IIKSLWAVTVVATIVILFVAL).

This sequence belongs to the FrdC family. Part of an enzyme complex containing four subunits: a flavoprotein (FrdA), an iron-sulfur protein (FrdB), and two hydrophobic anchor proteins (FrdC and FrdD).

The protein localises to the cell inner membrane. Its function is as follows. Two distinct, membrane-bound, FAD-containing enzymes are responsible for the catalysis of fumarate and succinate interconversion; fumarate reductase is used in anaerobic growth, and succinate dehydrogenase is used in aerobic growth. Anchors the catalytic components of the fumarate reductase complex to the cell inner membrane, binds quinones. This Shigella boydii serotype 18 (strain CDC 3083-94 / BS512) protein is Fumarate reductase subunit C.